A 567-amino-acid chain; its full sequence is MATNAAAPPCPCYDTPEGVDILGRYDPEFAAILTRDSLAFVAGLQREFRGAVRYAMERRREAQRRYDAGELPRFDPATRPVREAGGWACAPVPPAIADRTVEITGPAEPRKMVINALNSGAKVFMADFEDALSPTWENLMRGQVNLRDAVAGTITYRDAARGREYRLGDRPATLFVRPRGWHLPEAHVLVDGEPAIGCLVDFGLYFFHSHAAFRSGQGADFGPFFYLPKMEHSREARIWKGVFERAEKEAGIGRGSIRATVLVETLPAVFQMEEILHELRDHSAGLNCGRWDYIFSYVKTFRARPDRLLPDRALVGMAQHFMRSYSHLLIQTCHRRGVHAMGGMAAQIPIKDDAAANEAALELVRKDKLREVRAGHDGTWAAHPGLIPAIREVFEGHLGGRPNQIDAAAGDAARAGVAVTEEDLLQPPRGARTVEGLRHNTRVGVQYVAAWLSGSGSVPLYNLMEDAATAEISRVQNWQWLRHGAVLDAGGVEVRATPELLARVVEVEMARVEAEVGAERFRRGRYAEAGRIFSRQCTAPELDDFLTLDAYNLIVVHHPGASSPCKL.

Arginine 177 functions as the Proton acceptor in the catalytic mechanism. Aspartate 466 (proton donor) is an active-site residue. The short motif at 565–567 (CKL) is the Microbody targeting signal element.

Belongs to the malate synthase family.

The protein resides in the glyoxysome. It catalyses the reaction glyoxylate + acetyl-CoA + H2O = (S)-malate + CoA + H(+). Its pathway is carbohydrate metabolism; glyoxylate cycle; (S)-malate from isocitrate: step 2/2. In Oryza sativa subsp. japonica (Rice), this protein is Malate synthase.